The chain runs to 245 residues: Aliphatic sulfonates import ATP-binding protein SsuB 1 (245 aa).

The ABC transporter domain maps to valine 8–tyrosine 223. Residue glycine 40–threonine 47 coordinates ATP.

Belongs to the ABC transporter superfamily. Aliphatic sulfonates importer (TC 3.A.1.17.2) family. The complex is composed of two ATP-binding proteins (SsuB), two transmembrane proteins (SsuC) and a solute-binding protein (SsuA).

It localises to the cell membrane. The enzyme catalyses ATP + H2O + aliphatic sulfonate-[sulfonate-binding protein]Side 1 = ADP + phosphate + aliphatic sulfonateSide 2 + [sulfonate-binding protein]Side 1.. Part of the ABC transporter complex SsuABC involved in aliphatic sulfonates import. Responsible for energy coupling to the transport system. The sequence is that of Aliphatic sulfonates import ATP-binding protein SsuB 1 from Nocardia farcinica (strain IFM 10152).